We begin with the raw amino-acid sequence, 157 residues long: uncharacterized protein (157 aa).

In terms of domain architecture, N-acetyltransferase spans 9-146; the sequence is LLINYKTLDE…GDFYVWHPET (138 aa).

This is an uncharacterized protein from Bacillus cereus (strain ZK / E33L).